The sequence spans 405 residues: Formin-like protein 15a (405 aa).

The tract at residues 1 to 31 (MSLVEISGSDAMAAPMPGRVPPPPPRPPPMP) is disordered. Positions 18–31 (GRVPPPPPRPPPMP) are enriched in pro residues. Positions 52-405 (FPRPAKKRAS…VCWFFVRLMI (354 aa)) constitute an FH2 domain.

The protein belongs to the formin-like family. Class-II subfamily.

The chain is Formin-like protein 15a (FH15A) from Arabidopsis thaliana (Mouse-ear cress).